The following is an 882-amino-acid chain: Alanine--tRNA ligase (882 aa).

Zn(2+)-binding residues include H571, H575, C673, and H677.

This sequence belongs to the class-II aminoacyl-tRNA synthetase family. Zn(2+) serves as cofactor.

Its subcellular location is the cytoplasm. It catalyses the reaction tRNA(Ala) + L-alanine + ATP = L-alanyl-tRNA(Ala) + AMP + diphosphate. Its function is as follows. Catalyzes the attachment of alanine to tRNA(Ala) in a two-step reaction: alanine is first activated by ATP to form Ala-AMP and then transferred to the acceptor end of tRNA(Ala). Also edits incorrectly charged Ser-tRNA(Ala) and Gly-tRNA(Ala) via its editing domain. This Stenotrophomonas maltophilia (strain K279a) protein is Alanine--tRNA ligase.